An 89-amino-acid polypeptide reads, in one-letter code: UPF0297 protein lp_2275 (89 aa).

It belongs to the UPF0297 family.

The chain is UPF0297 protein lp_2275 from Lactiplantibacillus plantarum (strain ATCC BAA-793 / NCIMB 8826 / WCFS1) (Lactobacillus plantarum).